A 199-amino-acid polypeptide reads, in one-letter code: Probable nicotinate-nucleotide adenylyltransferase (199 aa).

This sequence belongs to the NadD family.

The enzyme catalyses nicotinate beta-D-ribonucleotide + ATP + H(+) = deamido-NAD(+) + diphosphate. The protein operates within cofactor biosynthesis; NAD(+) biosynthesis; deamido-NAD(+) from nicotinate D-ribonucleotide: step 1/1. In terms of biological role, catalyzes the reversible adenylation of nicotinate mononucleotide (NaMN) to nicotinic acid adenine dinucleotide (NaAD). In Leptospira interrogans serogroup Icterohaemorrhagiae serovar copenhageni (strain Fiocruz L1-130), this protein is Probable nicotinate-nucleotide adenylyltransferase.